We begin with the raw amino-acid sequence, 245 residues long: Leucyl/phenylalanyl-tRNA--protein transferase (245 aa).

The protein belongs to the L/F-transferase family.

Its subcellular location is the cytoplasm. The catalysed reaction is N-terminal L-lysyl-[protein] + L-leucyl-tRNA(Leu) = N-terminal L-leucyl-L-lysyl-[protein] + tRNA(Leu) + H(+). It catalyses the reaction N-terminal L-arginyl-[protein] + L-leucyl-tRNA(Leu) = N-terminal L-leucyl-L-arginyl-[protein] + tRNA(Leu) + H(+). It carries out the reaction L-phenylalanyl-tRNA(Phe) + an N-terminal L-alpha-aminoacyl-[protein] = an N-terminal L-phenylalanyl-L-alpha-aminoacyl-[protein] + tRNA(Phe). Functionally, functions in the N-end rule pathway of protein degradation where it conjugates Leu, Phe and, less efficiently, Met from aminoacyl-tRNAs to the N-termini of proteins containing an N-terminal arginine or lysine. This Paraburkholderia phymatum (strain DSM 17167 / CIP 108236 / LMG 21445 / STM815) (Burkholderia phymatum) protein is Leucyl/phenylalanyl-tRNA--protein transferase.